Here is a 151-residue protein sequence, read N- to C-terminus: Transcriptional repressor NrdR (151 aa).

A zinc finger spans residues 3-34 (CPYCGYGESKVVDSRATDDKMAIRRRRECLKC). Residues 49–139 (LLVIKKNMSR…VYRQFKDINT (91 aa)) enclose the ATP-cone domain.

It belongs to the NrdR family. Requires Zn(2+) as cofactor.

Functionally, negatively regulates transcription of bacterial ribonucleotide reductase nrd genes and operons by binding to NrdR-boxes. In Clostridium kluyveri (strain NBRC 12016), this protein is Transcriptional repressor NrdR.